We begin with the raw amino-acid sequence, 558 residues long: NAD(P)H-quinone oxidoreductase chain 4 (558 aa).

15 helical membrane passes run 25–45 (FPWL…VPFV), 56–76 (WFAL…YLTG), 90–110 (VSWL…LSMP), 111–131 (LILL…PVTF), 133–153 (PKLF…VFAV), 157–177 (LLFF…LAIW), 189–209 (FILY…AMGF), 230–250 (GFEL…LPIV), 264–284 (TAPV…YALM), 298–318 (FAPL…LTSF), 327–347 (IAYS…SFSE), 353–373 (AMLQ…LVGA), 397–417 (FALW…SGFV), 438–458 (IVID…LLSM), and 485–505 (VYII…PKLM).

The protein belongs to the complex I subunit 4 family.

Its subcellular location is the cellular thylakoid membrane. The enzyme catalyses a plastoquinone + NADH + (n+1) H(+)(in) = a plastoquinol + NAD(+) + n H(+)(out). It carries out the reaction a plastoquinone + NADPH + (n+1) H(+)(in) = a plastoquinol + NADP(+) + n H(+)(out). Its function is as follows. NDH-1 shuttles electrons from NAD(P)H, via FMN and iron-sulfur (Fe-S) centers, to quinones in the respiratory chain. The immediate electron acceptor for the enzyme in this species is believed to be plastoquinone. Couples the redox reaction to proton translocation (for every two electrons transferred, four hydrogen ions are translocated across the cytoplasmic membrane), and thus conserves the redox energy in a proton gradient. The chain is NAD(P)H-quinone oxidoreductase chain 4 from Synechococcus sp. (strain CC9311).